Reading from the N-terminus, the 286-residue chain is Phycobilisome 32.1 kDa linker polypeptide, phycocyanin-associated, rod (286 aa).

Residues 2–180 enclose the PBS-linker domain; sequence AITAAASRLG…LYRGYANSDR (179 aa). In terms of domain architecture, CpcD-like spans 234–286; that stretch reads DRVYRIEVTGVRSPGYPSVRRSSYAIIVPYERLSEKIQQIHKLGGKIVSITSA.

This sequence belongs to the phycobilisome linker protein family.

It localises to the cellular thylakoid membrane. Its function is as follows. Rod linker protein, associated with phycocyanin. Linker polypeptides determine the state of aggregation and the location of the disk-shaped phycobiliprotein units within the phycobilisome and modulate their spectroscopic properties in order to mediate a directed and optimal energy transfer. The sequence is that of Phycobilisome 32.1 kDa linker polypeptide, phycocyanin-associated, rod (cpcC) from Mastigocladus laminosus (Fischerella sp.).